The chain runs to 607 residues: Glutamine--fructose-6-phosphate aminotransferase [isomerizing] (607 aa).

Residue cysteine 2 is the Nucleophile; for GATase activity of the active site. One can recognise a Glutamine amidotransferase type-2 domain in the interval 2 to 217 (CGIIGILGKK…DGDWAVLTRE (216 aa)). 2 consecutive SIS domains span residues 277 to 422 (TVRS…QRGS) and 455 to 597 (ICRD…VDQP). Catalysis depends on lysine 602, which acts as the For Fru-6P isomerization activity.

As to quaternary structure, homodimer.

It localises to the cytoplasm. The catalysed reaction is D-fructose 6-phosphate + L-glutamine = D-glucosamine 6-phosphate + L-glutamate. In terms of biological role, catalyzes the first step in hexosamine metabolism, converting fructose-6P into glucosamine-6P using glutamine as a nitrogen source. This Bartonella quintana (strain Toulouse) (Rochalimaea quintana) protein is Glutamine--fructose-6-phosphate aminotransferase [isomerizing].